The following is a 750-amino-acid chain: Photosystem I P700 chlorophyll a apoprotein A1 (750 aa).

A run of 8 helical transmembrane segments spans residues 70-93 (VFSA…FHGA), 156-179 (LYCT…FHYH), 195-219 (LNHH…HVSL), 291-309 (TAHH…GHMY), 346-369 (WHAQ…HHMY), 385-411 (LSLF…IFMV), 433-455 (AIIS…LYIH), and 531-549 (FLVH…LILL). 2 residues coordinate [4Fe-4S] cluster: cysteine 573 and cysteine 582. Transmembrane regions (helical) follow at residues 589-610 (HVFL…HFSW) and 664-686 (LSAY…MFLF). Chlorophyll a' is bound at residue histidine 675. Positions 683 and 691 each coordinate chlorophyll a. Tryptophan 692 is a phylloquinone binding site. A helical membrane pass occupies residues 724-744 (AVGVAHYLLGGIATTWAFFLA).

Belongs to the PsaA/PsaB family. As to quaternary structure, the PsaA/B heterodimer binds the P700 chlorophyll special pair and subsequent electron acceptors. PSI consists of a core antenna complex that captures photons, and an electron transfer chain that converts photonic excitation into a charge separation. The eukaryotic PSI reaction center is composed of at least 11 subunits. P700 is a chlorophyll a/chlorophyll a' dimer, A0 is one or more chlorophyll a, A1 is one or both phylloquinones and FX is a shared 4Fe-4S iron-sulfur center. serves as cofactor.

The protein localises to the plastid. It is found in the chloroplast thylakoid membrane. The catalysed reaction is reduced [plastocyanin] + hnu + oxidized [2Fe-2S]-[ferredoxin] = oxidized [plastocyanin] + reduced [2Fe-2S]-[ferredoxin]. In terms of biological role, psaA and PsaB bind P700, the primary electron donor of photosystem I (PSI), as well as the electron acceptors A0, A1 and FX. PSI is a plastocyanin-ferredoxin oxidoreductase, converting photonic excitation into a charge separation, which transfers an electron from the donor P700 chlorophyll pair to the spectroscopically characterized acceptors A0, A1, FX, FA and FB in turn. Oxidized P700 is reduced on the lumenal side of the thylakoid membrane by plastocyanin. This is Photosystem I P700 chlorophyll a apoprotein A1 from Angiopteris evecta (Mule's foot fern).